Consider the following 838-residue polypeptide: Leucine--tRNA ligase (838 aa).

The 'HIGH' region signature appears at Pro36–His46. The short motif at Lys611–Ser615 is the 'KMSKS' region element. ATP is bound at residue Lys614.

The protein belongs to the class-I aminoacyl-tRNA synthetase family.

Its subcellular location is the cytoplasm. It carries out the reaction tRNA(Leu) + L-leucine + ATP = L-leucyl-tRNA(Leu) + AMP + diphosphate. The sequence is that of Leucine--tRNA ligase from Wolbachia pipientis wMel.